The primary structure comprises 442 residues: ATP-dependent RNA helicase SUB2 (442 aa).

The Q motif signature appears at 59–87; sequence TGFRDFLLKGELLRAITDCGFEHPSEVQQ. The Helicase ATP-binding domain occupies 90 to 265; the sequence is IPTAILNVDV…KKFMRNPLEV (176 aa). 103 to 110 lines the ATP pocket; the sequence is AKSGLGKT. A DECD box motif is present at residues 212–215; the sequence is DECD. The 146-residue stretch at 293–438 folds into the Helicase C-terminal domain; it reads KLNELLDSLE…EYPQGGVDSS (146 aa).

It belongs to the DEAD box helicase family. DECD subfamily.

It localises to the nucleus. The catalysed reaction is ATP + H2O = ADP + phosphate + H(+). Its function is as follows. ATP-binding RNA helicase involved in transcription elongation and required for the export of mRNA out of the nucleus. SUB2 also plays a role in pre-mRNA splicing and spliceosome assembly. May be involved in rDNA and telomeric silencing, and maintenance of genome integrity. This chain is ATP-dependent RNA helicase SUB2 (SUB2), found in Ajellomyces capsulatus (strain NAm1 / WU24) (Darling's disease fungus).